The following is a 78-amino-acid chain: Small ribosomal subunit protein bS18 (78 aa).

It belongs to the bacterial ribosomal protein bS18 family. Part of the 30S ribosomal subunit. Forms a tight heterodimer with protein bS6.

Its function is as follows. Binds as a heterodimer with protein bS6 to the central domain of the 16S rRNA, where it helps stabilize the platform of the 30S subunit. The sequence is that of Small ribosomal subunit protein bS18 from Lactobacillus delbrueckii subsp. bulgaricus (strain ATCC BAA-365 / Lb-18).